The sequence spans 143 residues: MAKKIEGYIKLQVAAGDAKPAPPIGPALGQRGVNIMEFCKQFNAATQEIEKGTPLPTVITVYADRSFTFVTKTPPATFFIKKAVGIKSGSKTPGKASAGTIKRSQLAEIAQAKMKDLNANDIDAATKIIEGSARAMGLTVVEG.

Belongs to the universal ribosomal protein uL11 family. In terms of assembly, part of the ribosomal stalk of the 50S ribosomal subunit. Interacts with L10 and the large rRNA to form the base of the stalk. L10 forms an elongated spine to which L12 dimers bind in a sequential fashion forming a multimeric L10(L12)X complex. In terms of processing, one or more lysine residues are methylated.

Its function is as follows. Forms part of the ribosomal stalk which helps the ribosome interact with GTP-bound translation factors. The chain is Large ribosomal subunit protein uL11 from Novosphingobium aromaticivorans (strain ATCC 700278 / DSM 12444 / CCUG 56034 / CIP 105152 / NBRC 16084 / F199).